Consider the following 173-residue polypeptide: Secreted RxLR effector protein RXLR-C12 (173 aa).

Residues 1–18 form the signal peptide; the sequence is MLQFATAFLAISANVVMT. Positions 41-55 match the RxLR-dEER motif; that stretch reads RRLRTHEIGTVPEER. N-linked (GlcNAc...) asparagine glycosylation is present at Asn155.

The protein belongs to the RxLR effector family.

The protein localises to the secreted. The protein resides in the host cytoplasm. It is found in the host nucleus. Secreted effector that suppresses pattern-triggered immunity (PTI) in plant host. The sequence is that of Secreted RxLR effector protein RXLR-C12 from Plasmopara halstedii (Downy mildew of sunflower).